We begin with the raw amino-acid sequence, 248 residues long: Ribosomal RNA small subunit methyltransferase J (248 aa).

S-adenosyl-L-methionine-binding positions include 98-99, 114-115, 150-151, and Asp168; these read RD, ER, and SS.

It belongs to the methyltransferase superfamily. RsmJ family.

It localises to the cytoplasm. The enzyme catalyses guanosine(1516) in 16S rRNA + S-adenosyl-L-methionine = N(2)-methylguanosine(1516) in 16S rRNA + S-adenosyl-L-homocysteine + H(+). Specifically methylates the guanosine in position 1516 of 16S rRNA. The chain is Ribosomal RNA small subunit methyltransferase J from Shewanella baltica (strain OS223).